The sequence spans 254 residues: Protein Thf1 (254 aa).

Residues 183 to 217 (SDKLQKDLDLYRSNLEKMEQARITMEEAIQADRRK) are a coiled coil. A compositionally biased stretch (basic and acidic residues) spans 213-227 (ADRRKREQREQEKLA). Residues 213-254 (ADRRKREQREQEKLAKAAAAEAPAALEASSDNPEPETSETPS) form a disordered region. A compositionally biased stretch (low complexity) spans 228 to 240 (KAAAAEAPAALEA). Acidic residues predominate over residues 245-254 (PEPETSETPS).

This sequence belongs to the THF1 family.

May be involved in photosynthetic membrane biogenesis. The chain is Protein Thf1 from Synechococcus elongatus (strain ATCC 33912 / PCC 7942 / FACHB-805) (Anacystis nidulans R2).